The primary structure comprises 93 residues: CRISPR-associated endoribonuclease Cas2 (93 aa).

Aspartate 13 contributes to the Mg(2+) binding site.

The protein belongs to the CRISPR-associated endoribonuclease Cas2 protein family. Homodimer, forms a heterotetramer with a Cas1 homodimer. The cofactor is Mg(2+).

Functionally, CRISPR (clustered regularly interspaced short palindromic repeat), is an adaptive immune system that provides protection against mobile genetic elements (viruses, transposable elements and conjugative plasmids). CRISPR clusters contain sequences complementary to antecedent mobile elements and target invading nucleic acids. CRISPR clusters are transcribed and processed into CRISPR RNA (crRNA). Functions as a ssRNA-specific endoribonuclease. Involved in the integration of spacer DNA into the CRISPR cassette. This is CRISPR-associated endoribonuclease Cas2 from Korarchaeum cryptofilum (strain OPF8).